The following is a 100-amino-acid chain: Urease subunit gamma (100 aa).

This sequence belongs to the urease gamma subunit family. Heterotrimer of UreA (gamma), UreB (beta) and UreC (alpha) subunits. Three heterotrimers associate to form the active enzyme.

Its subcellular location is the cytoplasm. The catalysed reaction is urea + 2 H2O + H(+) = hydrogencarbonate + 2 NH4(+). Its pathway is nitrogen metabolism; urea degradation; CO(2) and NH(3) from urea (urease route): step 1/1. The sequence is that of Urease subunit gamma from Staphylococcus epidermidis (strain ATCC 35984 / DSM 28319 / BCRC 17069 / CCUG 31568 / BM 3577 / RP62A).